The sequence spans 344 residues: 2-methyl-6-phytyl-1,4-hydroquinone methyltransferase, chloroplastic (344 aa).

A chloroplast-targeting transit peptide spans 1 to 62 (MACSMLNGVD…LTTVTKCTLS (62 aa)). At 63–313 (ASERPASQPR…PVHPLVFLYR (251 aa)) the chain is on the chloroplast intermembrane side. The segment at 121 to 130 (VVDVGGGTGF) is SAM motif I. Residues 166–179 (CRIIEGDAEDLPFP) form an SAM motif II region. Residues 207-220 (RVLKLGGKACLIGP) form an SAM motif III region. Residues 314-334 (FLLGALASTYYVLVPIYMWIK) form a helical membrane-spanning segment. The Stromal portion of the chain corresponds to 335-344 (DKIFPKGMPL).

It belongs to the class I-like SAM-binding methyltransferase superfamily. MPBQ/MBSQ MT family.

The protein localises to the plastid. Its subcellular location is the chloroplast inner membrane. The enzyme catalyses 2-methyl-6-phytyl-1,4-benzene-1,4-diol + S-adenosyl-L-methionine = 2,3-dimethyl-6-phytylbenzene-1,4-diol + S-adenosyl-L-homocysteine + H(+). It catalyses the reaction 2-methyl-6-(all-trans-nonaprenyl)benzene-1,4-diol + S-adenosyl-L-methionine = plastoquinol-9 + S-adenosyl-L-homocysteine + H(+). It carries out the reaction 6-geranylgeranyl-2-methylbenzene-1,4-diol + S-adenosyl-L-methionine = 6-geranylgeranyl-2,3-dimethylbenzene-1,4-diol + S-adenosyl-L-homocysteine + H(+). Its pathway is cofactor biosynthesis; tocopherol biosynthesis. Its function is as follows. Involved in a key methylation step in both tocopherols (vitamin E) and plastoquinone synthesis. Catalyzes the conversion of 2-methyl-6-phytyl-1,4-hydroquinone (MPBQ) to 2,3-dimethyl-6-phytyl-1,4-hydroquinone (DMPQ, a substrate for tocopherol cyclase), and 2-methyl-6-solanyl-1,4-benzoquinone (MSBQ) to plastoquinone. This Spinacia oleracea (Spinach) protein is 2-methyl-6-phytyl-1,4-hydroquinone methyltransferase, chloroplastic.